Reading from the N-terminus, the 705-residue chain is MATANFGKIQIGIYVEIKRSDGRIHQAMVTSLNEDNESVTVEWIENGDTKGKEIDLESIFSLNPDLVPDEDIEPSPELPPPSSSSKVNKIVKNRRTVAAVKNDPPPRDNRVVGSARARPSQLPEQSSSAQQNGSVSDISPVQAAKKEFGPPSRRKSNCVKEVEKLQEKREKRRLQQQELREKRAQDVDATNPNYEIMCMIRDFRGSLDYRPLTTADPIDEHRICVCVRKRPLNKKETQMKDLDVITIPSKDVVMVHEPKQKVDLTRYLENQTFRFDYAFDDSAPNEMVYRFTARPLVETIFERGMATCFAYGQTGSGKTHTMGGDFSGKNQDCSKGIYALAARDVFLMLKKPNYKKLELQVYATFFEIYSGKVFDLLNRKTKLRVLEDGKQQVQVVGLQEREVKCVEDVLKLIDIGNSCRTSGQTSANAHSSRSHAVFQIILRRKGKLHGKFSLIDLAGNERGADTSSADRQTRLEGAEINKSLLALKECIRALGRNKPHTPFRASKLTQVLRDSFIGENSRTCMIATISPGMASCENTLNTLRYANRVKELTVNPAAAGDVHPIMHHPPSQIDDLETQWGVGSSPQRDDLKLLCEQNEEEVSPQLFTFHEAVSQMVEMEEQVVEDHRAVFQESIRWIEDEKALLEMTEEVDYDVDSYATQLEAILEQKIDILTELRDKVKSFRAALQEEEQASKQINPKRPRAL.

Residues 1 to 216 are globular; the sequence is MATANFGKIQ…LDYRPLTTAD (216 aa). Residues 65–186 are disordered; the sequence is DLVPDEDIEP…QELREKRAQD (122 aa). Serine 75 carries the phosphoserine modification. Position 96 is a phosphothreonine (threonine 96). The residue at position 101 (lysine 101) is an N6-acetyllysine. Residues 122-139 are compositionally biased toward polar residues; the sequence is LPEQSSSAQQNGSVSDIS. Phosphoserine is present on residues serine 134 and serine 139. Residues 158–186 are compositionally biased toward basic and acidic residues; sequence CVKEVEKLQEKREKRRLQQQELREKRAQD. In terms of domain architecture, Kinesin motor spans 222 to 552; sequence RICVCVRKRP…LRYANRVKEL (331 aa). Position 312-319 (312-319) interacts with ATP; the sequence is GQTGSGKT. Residues threonine 528 and tyrosine 545 each carry the phosphoserine modification. The stretch at 659–698 forms a coiled coil; it reads ATQLEAILEQKIDILTELRDKVKSFRAALQEEEQASKQIN.

It belongs to the TRAFAC class myosin-kinesin ATPase superfamily. Kinesin family. MCAK/KIF2 subfamily. As to quaternary structure, interacts with AURKA and PLK1. Interacts with PSRC1. Interacts with MCRS1; the interaction enhances recruitment of KIF2A to the minus ends of spindle microtubules which promotes chromosome alignment. As to expression, highest level in lung. High level in ovary, moderate levels in heart, kidney, placenta, skeletal muscle and spleen (at protein level). Pancreas and spleen express a shorter isoform (at protein level). Expressed in the flagellum of elongated spermatids and sperm in the testis lumen (at protein level). Isoform 1 expressed in neuronal cells. Isoform 2 expressed in astrocytes and fibroblasts.

It localises to the cytoplasm. The protein localises to the cytoskeleton. The protein resides in the microtubule organizing center. It is found in the centrosome. Its subcellular location is the spindle pole. It localises to the spindle. The protein localises to the lysosome. Plus end-directed microtubule-dependent motor required for normal brain development. May regulate microtubule dynamics during axonal growth. Required for normal progression through mitosis. Required for normal congress of chromosomes at the metaphase plate. Required for normal spindle dynamics during mitosis. Promotes spindle turnover. Implicated in formation of bipolar mitotic spindles. Has microtubule depolymerization activity. In Mus musculus (Mouse), this protein is Kinesin-like protein KIF2A (Kif2a).